A 184-amino-acid polypeptide reads, in one-letter code: KIVSRWMGSQNNHQQTHPNHHHHLPPLQHHANNYFPMPLSTYYPPDSSVPLPFPSPAGVNSTQAPFNPSQFCFSHRRKRRILFSQAQIYELERRFRQQKYLSAPEREHLATFIGLTPTQVKIWFQNHRYKTKKSKKESKNSPSSSSMTSSSSASNKVASTTHSPKVSSNGGNGSNTTNNNNKPG.

Disordered regions lie at residues 1-29 and 129-184; these read KIVSRWMGSQNNHQQTHPNHHHHLPPLQH and YKTK…NKPG. A DNA-binding region (homeobox) is located at residues 76–135; sequence RRKRRILFSQAQIYELERRFRQQKYLSAPEREHLATFIGLTPTQVKIWFQNHRYKTKKSK. Composition is skewed to low complexity over residues 140–161 and 174–184; these read NSPSSSSMTSSSSASNKVASTT and SNTTNNNNKPG.

This sequence belongs to the NK-2 homeobox family. Expressed in a segmental pattern in the endoderm and in the cephalic nervous system.

Its subcellular location is the nucleus. In terms of biological role, may play a role in patterning the gut. The protein is Homeobox protein LOX10 (LOX10) of Helobdella triserialis (Leech).